A 281-amino-acid chain; its full sequence is Cytochrome c oxidase subunit 3 (281 aa).

Residues 1–15 (MTHQTHAYHMVNPSP) are Mitochondrial matrix-facing. A helical transmembrane segment spans residues 16 to 34 (WPLTGALSALLLTSGLIMW). Topologically, residues 35–40 (FHYNSS) are mitochondrial intermembrane. A helical membrane pass occupies residues 41–66 (TLMFMGLTTMLLTMYQWWRDIIREGT). Topologically, residues 67–72 (FQGHHT) are mitochondrial matrix. The chain crosses the membrane as a helical span at residues 73–105 (PVVQKGLRYGMILFILSEVFFFIGFFWAFYHSS). Topologically, residues 106 to 128 (LAPTPELGGCWPPTGIHPLNPLE) are mitochondrial intermembrane. The chain crosses the membrane as a helical span at residues 129 to 152 (VPLLNTSILLASGVSITWAHHSLM). Residues 153–155 (EGN) are Mitochondrial matrix-facing. Residues 156-183 (RKQMIQALLITISLGLYFTILQAMEYYE) form a helical membrane-spanning segment. Residues 184 to 190 (ASFTISD) lie on the Mitochondrial intermembrane side of the membrane. A helical membrane pass occupies residues 191 to 223 (GVYGSTFFVATGFHGLHVIIGSTFLIVCLLRQL). At 224-232 (FYHFTSTHH) the chain is on the mitochondrial matrix side. The helical transmembrane segment at 233–256 (FGFEAAAWYWHFVDVVWLFLYVSI) threads the bilayer. The Mitochondrial intermembrane portion of the chain corresponds to 257–281 (YWWGSYFSSMISTTDFQSLSSGSNQ).

Belongs to the cytochrome c oxidase subunit 3 family. Component of the cytochrome c oxidase (complex IV, CIV), a multisubunit enzyme composed of 14 subunits. The complex is composed of a catalytic core of 3 subunits MT-CO1, MT-CO2 and MT-CO3, encoded in the mitochondrial DNA, and 11 supernumerary subunits COX4I, COX5A, COX5B, COX6A, COX6B, COX6C, COX7A, COX7B, COX7C, COX8 and NDUFA4, which are encoded in the nuclear genome. The complex exists as a monomer or a dimer and forms supercomplexes (SCs) in the inner mitochondrial membrane with NADH-ubiquinone oxidoreductase (complex I, CI) and ubiquinol-cytochrome c oxidoreductase (cytochrome b-c1 complex, complex III, CIII), resulting in different assemblies (supercomplex SCI(1)III(2)IV(1) and megacomplex MCI(2)III(2)IV(2)).

It is found in the mitochondrion inner membrane. The enzyme catalyses 4 Fe(II)-[cytochrome c] + O2 + 8 H(+)(in) = 4 Fe(III)-[cytochrome c] + 2 H2O + 4 H(+)(out). Its function is as follows. Component of the cytochrome c oxidase, the last enzyme in the mitochondrial electron transport chain which drives oxidative phosphorylation. The respiratory chain contains 3 multisubunit complexes succinate dehydrogenase (complex II, CII), ubiquinol-cytochrome c oxidoreductase (cytochrome b-c1 complex, complex III, CIII) and cytochrome c oxidase (complex IV, CIV), that cooperate to transfer electrons derived from NADH and succinate to molecular oxygen, creating an electrochemical gradient over the inner membrane that drives transmembrane transport and the ATP synthase. Cytochrome c oxidase is the component of the respiratory chain that catalyzes the reduction of oxygen to water. Electrons originating from reduced cytochrome c in the intermembrane space (IMS) are transferred via the dinuclear copper A center (CU(A)) of subunit 2 and heme A of subunit 1 to the active site in subunit 1, a binuclear center (BNC) formed by heme A3 and copper B (CU(B)). The BNC reduces molecular oxygen to 2 water molecules using 4 electrons from cytochrome c in the IMS and 4 protons from the mitochondrial matrix. The chain is Cytochrome c oxidase subunit 3 (MT-CO3) from Didelphis virginiana (North American opossum).